A 116-amino-acid polypeptide reads, in one-letter code: Ribosome-binding factor A (116 aa).

The protein belongs to the RbfA family. Monomer. Binds 30S ribosomal subunits, but not 50S ribosomal subunits or 70S ribosomes.

It is found in the cytoplasm. Its function is as follows. One of several proteins that assist in the late maturation steps of the functional core of the 30S ribosomal subunit. Associates with free 30S ribosomal subunits (but not with 30S subunits that are part of 70S ribosomes or polysomes). Required for efficient processing of 16S rRNA. May interact with the 5'-terminal helix region of 16S rRNA. The protein is Ribosome-binding factor A of Streptococcus pneumoniae (strain Hungary19A-6).